The sequence spans 157 residues: MINLIKKGDYVKVDYILEVDGKVIDTSIEEVAKENKIYYPEREYEPIGFIVGNGELIEGFEEAVIGMEVGEEKTVTIPPEKGYGLRDERLIQEIPKEMFADADFEPQEGMLILASGIPAKIIKVTDDTVTLDFNHELAGKELKFTIKVRDVQPAESE.

One can recognise a PPIase FKBP-type domain in the interval 1-95 (MINLIKKGDY…RDERLIQEIP (95 aa)). The segment at 86–137 (RDERLIQEIPKEMFADADFEPQEGMLILASGIPAKIIKVTDDTVTLDFNHEL) is IF.

The protein belongs to the FKBP-type PPIase family.

It localises to the cytoplasm. The catalysed reaction is [protein]-peptidylproline (omega=180) = [protein]-peptidylproline (omega=0). In terms of biological role, catalyzes the cis-trans isomerization of peptidyl prolyl bonds and accelerates protein folding. Also exhibits chaperone-like activity. The protein is Short-type peptidyl-prolyl cis-trans isomerase of Methanocaldococcus jannaschii (strain ATCC 43067 / DSM 2661 / JAL-1 / JCM 10045 / NBRC 100440) (Methanococcus jannaschii).